A 113-amino-acid chain; its full sequence is UPF0145 protein TK1926 (113 aa).

This sequence belongs to the UPF0145 family.

The protein is UPF0145 protein TK1926 of Thermococcus kodakarensis (strain ATCC BAA-918 / JCM 12380 / KOD1) (Pyrococcus kodakaraensis (strain KOD1)).